A 117-amino-acid polypeptide reads, in one-letter code: UPF0122 protein Cthe_0771 (117 aa).

This sequence belongs to the UPF0122 family.

In terms of biological role, might take part in the signal recognition particle (SRP) pathway. This is inferred from the conservation of its genetic proximity to ftsY/ffh. May be a regulatory protein. The chain is UPF0122 protein Cthe_0771 from Acetivibrio thermocellus (strain ATCC 27405 / DSM 1237 / JCM 9322 / NBRC 103400 / NCIMB 10682 / NRRL B-4536 / VPI 7372) (Clostridium thermocellum).